A 214-amino-acid chain; its full sequence is Probable nicotinate-nucleotide adenylyltransferase (214 aa).

This sequence belongs to the NadD family.

The catalysed reaction is nicotinate beta-D-ribonucleotide + ATP + H(+) = deamido-NAD(+) + diphosphate. It participates in cofactor biosynthesis; NAD(+) biosynthesis; deamido-NAD(+) from nicotinate D-ribonucleotide: step 1/1. Functionally, catalyzes the reversible adenylation of nicotinate mononucleotide (NaMN) to nicotinic acid adenine dinucleotide (NaAD). The sequence is that of Probable nicotinate-nucleotide adenylyltransferase from Buchnera aphidicola subsp. Acyrthosiphon pisum (strain Tuc7).